A 395-amino-acid polypeptide reads, in one-letter code: Xylose isomerase (395 aa).

Residues H54 and D57 contribute to the active site. Residues E181, E217, H220, D245, D255, D257, and D293 each coordinate Mg(2+).

Belongs to the xylose isomerase family. As to quaternary structure, homotetramer. Requires Mg(2+) as cofactor.

The protein localises to the cytoplasm. It carries out the reaction alpha-D-xylose = alpha-D-xylulofuranose. This is Xylose isomerase from Pseudarthrobacter chlorophenolicus (strain ATCC 700700 / DSM 12829 / CIP 107037 / JCM 12360 / KCTC 9906 / NCIMB 13794 / A6) (Arthrobacter chlorophenolicus).